The sequence spans 253 residues: Glutamate racemase (253 aa).

Substrate contacts are provided by residues 7–8 (DS) and 39–40 (YG). C70 serves as the catalytic Proton donor/acceptor. 71–72 (NS) is a binding site for substrate. Catalysis depends on C179, which acts as the Proton donor/acceptor. 180–181 (TH) contacts substrate.

This sequence belongs to the aspartate/glutamate racemases family.

It carries out the reaction L-glutamate = D-glutamate. Its pathway is cell wall biogenesis; peptidoglycan biosynthesis. Provides the (R)-glutamate required for cell wall biosynthesis. This Nitratiruptor sp. (strain SB155-2) protein is Glutamate racemase.